The following is a 209-amino-acid chain: Large ribosomal subunit protein uL3 (209 aa).

The tract at residues 127–164 (NFSGGQRTHGQSDRLRAPGSVGGASDPSRTFKGTKMGG) is disordered.

Belongs to the universal ribosomal protein uL3 family. As to quaternary structure, part of the 50S ribosomal subunit. Forms a cluster with proteins L14 and L19.

One of the primary rRNA binding proteins, it binds directly near the 3'-end of the 23S rRNA, where it nucleates assembly of the 50S subunit. In Chlorobium phaeobacteroides (strain BS1), this protein is Large ribosomal subunit protein uL3.